The primary structure comprises 991 residues: MSSIVNRASSASLPNFLAWRALGFRTICSGRLGFAPSVPDSPVSAGTKILESFKEEFEVGSRVVSFETGKIARFANGSVVLGMDETKVLSTVTCAKTDSPRDFLPLTVDYQEKQYAQGLIPNTYMRREGAPKERELLCGRLIDRPIRPLFPTGFYHEVQIMASVLSSDGKQDPDILAANASSAALMLSDVPWGGPIGVIRIGRICGQFVVNPTMDELSSSDLNLIYACTRDKTMMIDVQSREISEKDLAAALRLAHPEAVKYLDPQIRLAEKAGKQKKEYKLSMLSDKTLEKVADLAATRIESVFTDPSYGKFERGEALDNIGKDVRKVFEEEGDQESLSILPKAVDTVRKKVVRSRMISDGFRVDGRHVDEVRPIYCESHYLPALHGSALFSRGDTQVLCTVTLGAPAEAQSLDSLVGPPKKRFMLHYSFPPYCTNEVGKRGGLNRREVGHGTLAEKALLAVLPPEEAFPYTIRINSEVMSSDGSTSMASVCGGSMALMDAGIPLRAHVAGVSVGLITDVDPSSGEIKDYRIVTDILGLEDHLGDMDFKIAGTRDGVTAIQLDIKPAGIPLDIVCESLENAREARLQILDHMERNINSPRGQDGAYSPRLATLKYSNDSLRTLIGPMGVLKRKIEVETGARLSIDNGTLTIVAKNQDVMEKAQEQVDFIIGRELVVGGVYKGTVSSIKEYGAFVEFPGGQQGLLHMSELSHEPVSKVSDVLDIGQCITTMCIETDVRGNIKLSRKALLPKPKRKPASDAGKDPVMKESSTVYIENSSVGEIVASMPSIVTPLQKSRLSVPAVVIRTAVECNEAEKSSPVNDNDKPRRAATSKPDRKPKSTASKLIATQKEEEALESIAPEETSAECGEILKQDGKLKSVSPKNNSTASNLVSFSKAKKSTMKENLSENKAEESASVSTRKLKIGTEMTATVDHVRALGLVLDLGGEIRGMYIFQGDKDKFKKGDTLRVKCTSFNTKGVPVMALVDEEGEE.

A mitochondrion-targeting transit peptide spans 1 to 39; it reads MSSIVNRASSASLPNFLAWRALGFRTICSGRLGFAPSVP. The KH domain maps to 609 to 667; the sequence is PRLATLKYSNDSLRTLIGPMGVLKRKIEVETGARLSIDNGTLTIVAKNQDVMEKAQEQV. Residues 678–746 enclose the S1 motif 1 domain; that stretch reads GGVYKGTVSS…VRGNIKLSRK (69 aa). Positions 813-865 are disordered; the sequence is EAEKSSPVNDNDKPRRAATSKPDRKPKSTASKLIATQKEEEALESIAPEETSA. The span at 822–838 shows a compositional bias: basic and acidic residues; sequence DNDKPRRAATSKPDRKP. Residues 925-987 form the S1 motif 2 domain; the sequence is GTEMTATVDH…GVPVMALVDE (63 aa).

This sequence belongs to the polyribonucleotide nucleotidyltransferase family.

It is found in the mitochondrion. The catalysed reaction is RNA(n+1) + phosphate = RNA(n) + a ribonucleoside 5'-diphosphate. In terms of biological role, involved in the 3'-end maturation of mitochondrial mRNAs, rRNAs and tRNAs. Functions as a poly(A) mRNA 3'-5' degrading phosphorylase and is required for the degradation of highly expressed transcripts of non-coding regions. This is Polyribonucleotide nucleotidyltransferase 2, mitochondrial (PNP2) from Arabidopsis thaliana (Mouse-ear cress).